Consider the following 59-residue polypeptide: Large ribosomal subunit protein bL32 (59 aa).

Residues 1–22 (MAVQQNKKSPSKRGMHRSHDFL) are disordered.

Belongs to the bacterial ribosomal protein bL32 family.

This is Large ribosomal subunit protein bL32 from Thiobacillus denitrificans (strain ATCC 25259 / T1).